A 203-amino-acid polypeptide reads, in one-letter code: Holliday junction branch migration complex subunit RuvA (203 aa).

Residues 1–63 are domain I; that stretch reads MIGKLSGRVD…EDHINLYGFL (63 aa). Residues 64-142 are domain II; it reads SLEEKSFFNL…KISSSSAAIK (79 aa). The segment at 143–149 is flexible linker; sequence DSLNIKG. The tract at residues 150-203 is domain III; that stretch reads ITPVASSEVIKALINMGFSRFEAQNAVQEIITKNPEISIDELIRTALKNRNSNF.

Belongs to the RuvA family. In terms of assembly, homotetramer. Forms an RuvA(8)-RuvB(12)-Holliday junction (HJ) complex. HJ DNA is sandwiched between 2 RuvA tetramers; dsDNA enters through RuvA and exits via RuvB. An RuvB hexamer assembles on each DNA strand where it exits the tetramer. Each RuvB hexamer is contacted by two RuvA subunits (via domain III) on 2 adjacent RuvB subunits; this complex drives branch migration. In the full resolvosome a probable DNA-RuvA(4)-RuvB(12)-RuvC(2) complex forms which resolves the HJ.

It is found in the cytoplasm. In terms of biological role, the RuvA-RuvB-RuvC complex processes Holliday junction (HJ) DNA during genetic recombination and DNA repair, while the RuvA-RuvB complex plays an important role in the rescue of blocked DNA replication forks via replication fork reversal (RFR). RuvA specifically binds to HJ cruciform DNA, conferring on it an open structure. The RuvB hexamer acts as an ATP-dependent pump, pulling dsDNA into and through the RuvAB complex. HJ branch migration allows RuvC to scan DNA until it finds its consensus sequence, where it cleaves and resolves the cruciform DNA. This Rickettsia bellii (strain OSU 85-389) protein is Holliday junction branch migration complex subunit RuvA.